A 118-amino-acid chain; its full sequence is Large ribosomal subunit protein uL24 (118 aa).

The protein belongs to the universal ribosomal protein uL24 family. As to quaternary structure, part of the 50S ribosomal subunit.

Functionally, one of two assembly initiator proteins, it binds directly to the 5'-end of the 23S rRNA, where it nucleates assembly of the 50S subunit. In terms of biological role, one of the proteins that surrounds the polypeptide exit tunnel on the outside of the subunit. The chain is Large ribosomal subunit protein uL24 from Prochlorococcus marinus (strain AS9601).